We begin with the raw amino-acid sequence, 673 residues long: Methionine--tRNA ligase (673 aa).

Positions 13 to 23 (PYANGSIHLGH) match the 'HIGH' region motif. Residues cysteine 144, cysteine 147, cysteine 157, and cysteine 160 each coordinate Zn(2+). Residues 330–334 (KMSKS) carry the 'KMSKS' region motif. ATP is bound at residue lysine 333. Residues 572–673 (DFAQLDLRIA…GRARAGMTIS (102 aa)) enclose the tRNA-binding domain.

This sequence belongs to the class-I aminoacyl-tRNA synthetase family. MetG type 1 subfamily. Homodimer. Requires Zn(2+) as cofactor.

The protein localises to the cytoplasm. It catalyses the reaction tRNA(Met) + L-methionine + ATP = L-methionyl-tRNA(Met) + AMP + diphosphate. Is required not only for elongation of protein synthesis but also for the initiation of all mRNA translation through initiator tRNA(fMet) aminoacylation. In Dichelobacter nodosus (strain VCS1703A), this protein is Methionine--tRNA ligase.